The primary structure comprises 344 residues: Putative [LysW]-lysine/[LysW]-ornithine hydrolase (344 aa).

Residue His66 participates in Zn(2+) binding. The active site involves Asp68. Asp90 serves as a coordination point for Zn(2+). Glu117 (proton acceptor) is an active-site residue. Zn(2+)-binding residues include Glu118, Glu139, and His297.

The protein belongs to the peptidase M20A family. LysK subfamily. Zn(2+) serves as cofactor. Co(2+) is required as a cofactor.

The protein resides in the cytoplasm. The enzyme catalyses [amino-group carrier protein]-C-terminal-gamma-(L-lysyl)-L-glutamate + H2O = [amino-group carrier protein]-C-terminal-L-glutamate + L-lysine. It catalyses the reaction [amino-group carrier protein]-C-terminal-gamma-(L-ornithyl)-L-glutamate + H2O = [amino-group carrier protein]-C-terminal-L-glutamate + L-ornithine. The protein operates within amino-acid biosynthesis; L-lysine biosynthesis via AAA pathway; L-lysine from L-alpha-aminoadipate (Thermus route): step 5/5. It participates in amino-acid biosynthesis; L-arginine biosynthesis. Catalyzes the release of L-lysine from [LysW]-gamma-L-lysine and the release of L-ornithine from [LysW]-L-ornithine. In Thermococcus kodakarensis (strain ATCC BAA-918 / JCM 12380 / KOD1) (Pyrococcus kodakaraensis (strain KOD1)), this protein is Putative [LysW]-lysine/[LysW]-ornithine hydrolase.